Reading from the N-terminus, the 360-residue chain is Phospho-N-acetylmuramoyl-pentapeptide-transferase (360 aa).

At 1–25 (MLVWLAEHLVKYYSGFNVFSYLTFR) the chain is on the periplasmic side. A helical membrane pass occupies residues 26–46 (AIVSLLTALFISLWMGPRMIA). Topologically, residues 47 to 71 (HLQKLSFGQVVRNDGPESHFSKRGT) are cytoplasmic. The chain crosses the membrane as a helical span at residues 72–92 (PTMGGIMILTAIVISVLLWAY). Position 93 (proline 93) is a topological domain, periplasmic. Residues 94–114 (SNPYVWCVLVVLVGYGVIGFV) form a helical membrane-spanning segment. Topologically, residues 115–131 (DDYRKVVRKDTKGLIAR) are cytoplasmic. A helical membrane pass occupies residues 132-152 (WKYFWMSVIALGVAFALYLAG). Over 153-167 (KDTPATQLVVPFFKD) the chain is Periplasmic. A helical membrane pass occupies residues 168–188 (VMPQLGLFYILLAYFVIVGTG). The Cytoplasmic segment spans residues 189–198 (NAVNLTDGLD). Residues 199 to 219 (GLAIMPTVFVAGGFALVAWAT) form a helical membrane-spanning segment. The Periplasmic segment spans residues 220–235 (GNMNFASYLHIPYLRH). Residues 236 to 256 (AGELVIVCTAIVGAGLGFLWF) traverse the membrane as a helical segment. At 257–262 (NTYPAQ) the chain is on the cytoplasmic side. The chain crosses the membrane as a helical span at residues 263–283 (VFMGDVGSLALGGALGIIAVL). At 284–287 (LRQE) the chain is on the periplasmic side. A helical membrane pass occupies residues 288–308 (FLLVIMGGVFVVETLSVILQV). At 309–337 (GSFKLRGQRIFRMAPIHHHYELKGWPEPR) the chain is on the cytoplasmic side. Residues 338–358 (VIVRFWIISLMLVLIGLATLK) form a helical membrane-spanning segment. The Periplasmic segment spans residues 359-360 (VR).

The protein belongs to the glycosyltransferase 4 family. MraY subfamily. Mg(2+) is required as a cofactor.

Its subcellular location is the cell inner membrane. The enzyme catalyses UDP-N-acetyl-alpha-D-muramoyl-L-alanyl-gamma-D-glutamyl-meso-2,6-diaminopimeloyl-D-alanyl-D-alanine + di-trans,octa-cis-undecaprenyl phosphate = di-trans,octa-cis-undecaprenyl diphospho-N-acetyl-alpha-D-muramoyl-L-alanyl-D-glutamyl-meso-2,6-diaminopimeloyl-D-alanyl-D-alanine + UMP. Its pathway is cell wall biogenesis; peptidoglycan biosynthesis. Catalyzes the initial step of the lipid cycle reactions in the biosynthesis of the cell wall peptidoglycan: transfers peptidoglycan precursor phospho-MurNAc-pentapeptide from UDP-MurNAc-pentapeptide onto the lipid carrier undecaprenyl phosphate, yielding undecaprenyl-pyrophosphoryl-MurNAc-pentapeptide, known as lipid I. The polypeptide is Phospho-N-acetylmuramoyl-pentapeptide-transferase (Shigella boydii serotype 18 (strain CDC 3083-94 / BS512)).